A 182-amino-acid chain; its full sequence is Troponin I, fast skeletal muscle (182 aa).

N-acetylglycine is present on Gly-2. Residues 2 to 48 are involved in binding TNC; the sequence is GDEEKRNRAITARRQHLKSVMLQIAATELEKEEGRREAEKQNYLAEH. Thr-12 carries the phosphothreonine; by PHK modification. Residues 97–117 are involved in binding TNC and actin; it reads NQKLFDLRGKFKRPPLRRVRM. Ser-118 carries the phosphoserine; by PKA modification.

This sequence belongs to the troponin I family. Binds to actin and tropomyosin.

Its function is as follows. Troponin I is the inhibitory subunit of troponin, the thin filament regulatory complex which confers calcium-sensitivity to striated muscle actomyosin ATPase activity. The sequence is that of Troponin I, fast skeletal muscle (TNNI2) from Oryctolagus cuniculus (Rabbit).